Consider the following 698-residue polypeptide: Serine/threonine-protein kinase Nek8 (698 aa).

The region spanning 4-258 (YERIRVVGRG…LSHIMAQPLC (255 aa)) is the Protein kinase domain. ATP contacts are provided by residues 10 to 18 (VGRGAFGIV) and Lys33. The Proton acceptor role is filled by Asp128. Thr162 is modified (phosphothreonine; by autocatalysis). The segment at 281-307 (LTPGTPMAPGSTGSRATSARCRGVPRG) is disordered. RCC1 repeat units follow at residues 415–466 (RGII…ALSA), 467–518 (DGEL…ILTS), 520–571 (GRVL…TLLC), 585–636 (SGAC…AIGA), and 638–689 (GEVY…LAVR).

It belongs to the protein kinase superfamily. NEK Ser/Thr protein kinase family. NIMA subfamily. In terms of assembly, interacts with PKD2; may regulate PKD2 targeting to the cilium. Interacts with ANKS6. Component of a complex containing at least ANKS6, INVS, NEK8 and NPHP3. ANKS6 may organize complex assembly by linking INVS and NPHP3 to NEK8 and INVS may target it to the proximal ciliary axoneme. Interacts with ANKS3. Mg(2+) is required as a cofactor.

It localises to the cytoplasm. The protein localises to the cytoskeleton. The protein resides in the cell projection. It is found in the cilium. Its subcellular location is the cilium axoneme. It localises to the microtubule organizing center. The protein localises to the centrosome. It catalyses the reaction L-seryl-[protein] + ATP = O-phospho-L-seryl-[protein] + ADP + H(+). It carries out the reaction L-threonyl-[protein] + ATP = O-phospho-L-threonyl-[protein] + ADP + H(+). Its function is as follows. Required for renal tubular integrity. May regulate local cytoskeletal structure in kidney tubule epithelial cells. May regulate ciliary biogenesis through targeting of proteins to the cilia. Plays a role in organogenesis and is involved in the regulation of the Hippo signaling pathway. This chain is Serine/threonine-protein kinase Nek8 (Nek8), found in Rattus norvegicus (Rat).